Consider the following 161-residue polypeptide: Phosphopantetheine adenylyltransferase (161 aa).

Substrate is bound at residue Thr-9. Residues Thr-9 to Phe-10 and His-17 each bind ATP. 3 residues coordinate substrate: Lys-41, Leu-73, and Arg-87. ATP contacts are provided by residues Gly-88–Arg-90, Glu-98, and Tyr-123–Thr-129.

It belongs to the bacterial CoaD family. Homohexamer. Mg(2+) is required as a cofactor.

The protein localises to the cytoplasm. The enzyme catalyses (R)-4'-phosphopantetheine + ATP + H(+) = 3'-dephospho-CoA + diphosphate. Its pathway is cofactor biosynthesis; coenzyme A biosynthesis; CoA from (R)-pantothenate: step 4/5. Its function is as follows. Reversibly transfers an adenylyl group from ATP to 4'-phosphopantetheine, yielding dephospho-CoA (dPCoA) and pyrophosphate. This Cupriavidus pinatubonensis (strain JMP 134 / LMG 1197) (Cupriavidus necator (strain JMP 134)) protein is Phosphopantetheine adenylyltransferase.